Consider the following 25-residue polypeptide: GLVSSIGRALGGLLADVVKSKEQPA.

The protein belongs to the frog skin active peptide (FSAP) family. Caerin subfamily. Expressed by the skin parotoid and/or rostral glands.

It is found in the secreted. Antimicrobial peptide, that adopts an alpha helical conformation which can disrupt bacterial membranes. Each caerin displays a different antimicrobial specificity. The chain is Caerin-2.2 from Ranoidea caerulea (Green tree frog).